A 397-amino-acid chain; its full sequence is Methylthioribose kinase (397 aa).

ATP-binding positions include Asn43, Lys60, and 114–116 (EDL). Asp232 lines the substrate pocket. Residue 249-251 (DPE) participates in ATP binding. Position 340 (Arg340) interacts with substrate.

The protein belongs to the methylthioribose kinase family. As to quaternary structure, homodimer.

The enzyme catalyses 5-(methylsulfanyl)-D-ribose + ATP = 5-(methylsulfanyl)-alpha-D-ribose 1-phosphate + ADP + H(+). It participates in amino-acid biosynthesis; L-methionine biosynthesis via salvage pathway; S-methyl-5-thio-alpha-D-ribose 1-phosphate from S-methyl-5'-thioadenosine (hydrolase route): step 2/2. Its function is as follows. Catalyzes the phosphorylation of methylthioribose into methylthioribose-1-phosphate. This Bacillus pumilus (strain SAFR-032) protein is Methylthioribose kinase.